The following is a 447-amino-acid chain: UPF0210 protein LSEI_0897 (447 aa).

This sequence belongs to the UPF0210 family. Homodimer.

This Lacticaseibacillus paracasei (strain ATCC 334 / BCRC 17002 / CCUG 31169 / CIP 107868 / KCTC 3260 / NRRL B-441) (Lactobacillus paracasei) protein is UPF0210 protein LSEI_0897.